Consider the following 216-residue polypeptide: LexA repressor (216 aa).

The segment at residues 28–48 is a DNA-binding region (H-T-H motif); it reads RAEIAAEFGFSSPNAAEEHLR. Residues Ser-134 and Lys-171 each act as for autocatalytic cleavage activity in the active site.

It belongs to the peptidase S24 family. As to quaternary structure, homodimer.

It carries out the reaction Hydrolysis of Ala-|-Gly bond in repressor LexA.. Functionally, represses a number of genes involved in the response to DNA damage (SOS response), including recA and lexA. In the presence of single-stranded DNA, RecA interacts with LexA causing an autocatalytic cleavage which disrupts the DNA-binding part of LexA, leading to derepression of the SOS regulon and eventually DNA repair. The polypeptide is LexA repressor (Ralstonia nicotianae (strain ATCC BAA-1114 / GMI1000) (Ralstonia solanacearum)).